A 676-amino-acid chain; its full sequence is RNA helicase NPH-II (676 aa).

The region spanning 172–347 (FLAWISHRPV…IFLPNPAFIH (176 aa)) is the Helicase ATP-binding domain. Position 185–192 (185–192 (GGTGVGKT)) interacts with ATP. Residues 296–299 (DEVH) carry the DEXH box motif. The 170-residue stretch at 366–535 (NPSSRMAYIE…NYILYANKFN (170 aa)) folds into the Helicase C-terminal domain.

This sequence belongs to the DEAD box helicase family. DEAH subfamily. As to quaternary structure, monomer.

It localises to the virion. It carries out the reaction ATP + H2O = ADP + phosphate + H(+). Functionally, NTP-dependent helicase that catalyzes unidirectional unwinding of 3'tailed duplex RNAs and plays an important role during transcription of early mRNAs, presumably by preventing R-loop formation behind the elongating RNA polymerase. Might also play a role in the export of newly synthesized mRNA chains out of the core into the cytoplasm. Required for replication and propagation of viral particles. This is RNA helicase NPH-II (OPG084) from Monkeypox virus.